The sequence spans 132 residues: Large ribosomal subunit protein bL17 (132 aa).

The protein belongs to the bacterial ribosomal protein bL17 family. As to quaternary structure, part of the 50S ribosomal subunit. Contacts protein L32.

In Ralstonia pickettii (strain 12J), this protein is Large ribosomal subunit protein bL17.